The following is a 902-amino-acid chain: Desmocollin-2 (902 aa).

Residues 1–27 form the signal peptide; that stretch reads MAAVGSMRSGSPAFGLGHLLTLAILAL. Residues 28–135 constitute a propeptide that is removed on maturation; that stretch reads ASDACKEVVL…TEKVLSRAKR (108 aa). 5 consecutive Cadherin domains span residues 136-243, 244-355, 356-471, 472-579, and 580-694; these read RWAP…YPIF, TQKL…LPTF, TRTT…GPEC, IPPM…FIPK, and QTVV…RLGP. At 136 to 694 the chain is on the extracellular side; it reads RWAPIPCSML…TGYADVRLGP (559 aa). N-linked (GlcNAc...) asparagine glycosylation is present at N166. N-linked (GlcNAc...) asparagine glycosylation is found at N392, N546, and N629. A helical membrane pass occupies residues 695 to 715; the sequence is WAILAILLGIALLFCILFTLV. At 716 to 902 the chain is on the cytoplasmic side; that stretch reads CSVSRASKQQ…RTLAEVCAKR (187 aa). 3 positions are modified to phosphoserine: S865, S869, and S874.

In terms of assembly, interacts with DSP, PKP2 and JUP. Interacts with DSG3; the interaction may limit the interaction of DSC3 with p38MAPK family members and therefore repress p38MAPK signaling activation. Expressed in intestinal epithelial cells (at protein level). Expressed in the heart. Expressed in tongue, bladder, stomach, liver, kidney, and lung.

Its subcellular location is the cell membrane. The protein resides in the cell junction. It is found in the desmosome. A component of desmosome cell-cell junctions which are required for positive regulation of cellular adhesion. Promotes timely incorporation of DSG2 into desmosome intercellular junctions and promotes interaction of desmosome cell junctions with intermediate filament cytokeratin, via modulation of DSP phosphorylation. Plays an important role in desmosome-mediated maintenance of intestinal epithelial cell intercellular adhesion strength and barrier function. Positively regulates wound healing of intestinal mucosa via promotion of epithelial cell migration, and also plays a role in mechanotransduction of force between intestinal epithelial cells and extracellular matrix. May contribute to epidermal cell positioning (stratification) by mediating differential adhesiveness between cells that express different isoforms. May promote p38MAPK signaling activation that facilitates keratinocyte migration. This chain is Desmocollin-2 (Dsc2), found in Mus musculus (Mouse).